The following is a 542-amino-acid chain: E3 ubiquitin-protein ligase RNF217 (542 aa).

Disordered regions lie at residues 1 to 140 and 176 to 216; these read MGEE…TRVG and APAS…TDSL. Positions 37 to 50 are enriched in low complexity; the sequence is SARAPPLRAASAEP. Residues 122–132 show a composition bias toward acidic residues; it reads DEQQEAPPGEE. Pro residues predominate over residues 185–196; sequence PASPPGAPPVLN. Positions 197 to 213 are enriched in low complexity; the sequence is PPSTRSSFPSPRLSLPT. Residues 259–478 are TRIAD supradomain; sequence MVLMCRVCLE…LSIFGCKYRY (220 aa). 10 residues coordinate Zn(2+): C263, C266, C283, C286, C383, C386, H391, C396, C423, and C426. The segment at 263–309 adopts an RING-type 1 zinc-finger fold; it reads CRVCLEDKPIKPLPCCKKAVCEECLKVYLSAQVQLGQVEIKCPITEC. Residues 328–396 form an IBR-type zinc finger; that stretch reads IKYKYFLELG…HSPWHEGVNC (69 aa). An RING-type 2; atypical zinc finger spans residues 423–452; sequence CPKCKIHIQRTEGCDHMTCSQCNTNFCYRC. C436 is an active-site residue. Zn(2+)-binding residues include C441, C444, C449, C452, H465, and C474. Residues 503–523 form a helical membrane-spanning segment; sequence LIMVLGLALGAIAVVIGLFVF.

This sequence belongs to the RBR family. RNF217 subfamily. In terms of assembly, interacts with HAX1. In terms of tissue distribution, mainly expressed in testis and skeletal muscle.

It is found in the membrane. The protein localises to the cytoplasm. The catalysed reaction is [E2 ubiquitin-conjugating enzyme]-S-ubiquitinyl-L-cysteine + [acceptor protein]-L-lysine = [E2 ubiquitin-conjugating enzyme]-L-cysteine + [acceptor protein]-N(6)-ubiquitinyl-L-lysine.. Its pathway is protein modification; protein ubiquitination. In terms of biological role, E3 ubiquitin-protein ligase which accepts ubiquitin from E2 ubiquitin-conjugating enzymes in the form of a thioester and then directly transfers the ubiquitin to targeted substrates. Mediates the degradation of the iron exporter ferroportin/SLC40A1 and thus regulates iron homeostasis. This is E3 ubiquitin-protein ligase RNF217 (RNF217) from Homo sapiens (Human).